Consider the following 340-residue polypeptide: Protein jhp_1168 (340 aa).

In terms of assembly, seems to interact with H.pylori HolB.

Functionally, could be the functional equivalent of DNA polymerase III delta subunit (HolA). The sequence is that of Protein jhp_1168 from Helicobacter pylori (strain J99 / ATCC 700824) (Campylobacter pylori J99).